Consider the following 126-residue polypeptide: Profilin (126 aa).

Belongs to the profilin family. Occurs in many kinds of cells as a complex with monomeric actin in a 1:1 ratio. In terms of tissue distribution, expressed in ovary and head.

The protein resides in the cytoplasm. It localises to the cytoskeleton. Binds to actin and affects the structure of the cytoskeleton. At high concentrations, profilin prevents the polymerization of actin, whereas it enhances it at low concentrations. By binding to PIP2, it may inhibit the formation of IP3 and DG. This profilin is required for intercellular cytoplasm transport during Drosophila oogenesis. Function in neurons is essential for adult survival, and is important for climbing behavior and activity. The polypeptide is Profilin (chic) (Drosophila melanogaster (Fruit fly)).